Here is a 249-residue protein sequence, read N- to C-terminus: Homeobox protein TGIF2LX (249 aa).

The span at 1 to 27 (MEAAADRPAETRSRVEKDSRRAKKDSP) shows a compositional bias: basic and acidic residues. Disordered stretches follow at residues 1-60 (MEAA…KKKR) and 121-215 (QRRG…EPVS). The segment covering 28-46 (AKTQSPAQDTSIMLRSNAD) has biased composition (polar residues). The homeobox; TALE-type DNA-binding region spans 55–118 (EHKKKRKGYL…INARRRILPD (64 aa)). Over residues 159-172 (DNVQSLPLRSSPKG) the composition is skewed to polar residues. Residues 202-215 (VSNITSSSSPEPVS) show a composition bias toward low complexity.

Belongs to the TALE/TGIF homeobox family.

The protein resides in the nucleus. Its function is as follows. May have a transcription role in testis. The protein is Homeobox protein TGIF2LX (TGIF2LX) of Miopithecus talapoin (Angolan talapoin).